Consider the following 348-residue polypeptide: MNPFILSILLLSLGLGTTLTFASSHWLLAWMGLEISTLAIIPLMSQHHHPRAVEATTKYFITQAAAAALILFASTTNAWITGQWDINFDLHFFPASMLTMALALKMGLAPVHFWLPEVLQGLDLTTGLILSTWQKLAPFILMCQIMPVNSSLITFLGVTSTLVGGWGGLNQTQLRKILAYSSIAHLGWMILVMQFNQQLALLALIIYIPMTFSTFMIFKTNSSTTVNTLAASWAKTPALTAITPMILLSLGGLPPLSGFMPKWMILQELTKQDIPLTASIAALSALLSLYFYLRVSYAMTLTISPNNLNATTPWRLQTTASTLPLAISATISAMLLPLAPATLALLSL.

The next 10 helical transmembrane spans lie at 3–23 (PFIL…TFAS), 24–44 (SHWL…IPLM), 60–80 (FITQ…NAWI), 95–115 (ASML…HFWL), 136–156 (LAPF…ITFL), 177–197 (ILAY…QFNQ), 198–218 (QLAL…FMIF), 239–259 (LTAI…LSGF), 273–293 (DIPL…YFYL), and 325–345 (LAIS…TLAL).

The protein belongs to the complex I subunit 2 family.

Its subcellular location is the mitochondrion inner membrane. It catalyses the reaction a ubiquinone + NADH + 5 H(+)(in) = a ubiquinol + NAD(+) + 4 H(+)(out). Functionally, core subunit of the mitochondrial membrane respiratory chain NADH dehydrogenase (Complex I) that is believed to belong to the minimal assembly required for catalysis. Complex I functions in the transfer of electrons from NADH to the respiratory chain. The immediate electron acceptor for the enzyme is believed to be ubiquinone. The sequence is that of NADH-ubiquinone oxidoreductase chain 2 (MT-ND2) from Gadus morhua (Atlantic cod).